A 125-amino-acid chain; its full sequence is Phosphoribosyl-AMP cyclohydrolase (125 aa).

Aspartate 74 contacts Mg(2+). Cysteine 75 is a binding site for Zn(2+). Aspartate 76 and aspartate 78 together coordinate Mg(2+). Positions 92 and 99 each coordinate Zn(2+).

This sequence belongs to the PRA-CH family. In terms of assembly, homodimer. Mg(2+) serves as cofactor. Zn(2+) is required as a cofactor.

It is found in the cytoplasm. It catalyses the reaction 1-(5-phospho-beta-D-ribosyl)-5'-AMP + H2O = 1-(5-phospho-beta-D-ribosyl)-5-[(5-phospho-beta-D-ribosylamino)methylideneamino]imidazole-4-carboxamide. Its pathway is amino-acid biosynthesis; L-histidine biosynthesis; L-histidine from 5-phospho-alpha-D-ribose 1-diphosphate: step 3/9. Catalyzes the hydrolysis of the adenine ring of phosphoribosyl-AMP. This is Phosphoribosyl-AMP cyclohydrolase from Geobacter metallireducens (strain ATCC 53774 / DSM 7210 / GS-15).